The primary structure comprises 683 residues: Glycine--tRNA ligase beta subunit (683 aa).

This sequence belongs to the class-II aminoacyl-tRNA synthetase family. In terms of assembly, tetramer of two alpha and two beta subunits.

It localises to the cytoplasm. The enzyme catalyses tRNA(Gly) + glycine + ATP = glycyl-tRNA(Gly) + AMP + diphosphate. The chain is Glycine--tRNA ligase beta subunit from Pseudomonas putida (strain GB-1).